A 270-amino-acid chain; its full sequence is tRNA (guanine-N(1)-)-methyltransferase (270 aa).

S-adenosyl-L-methionine is bound by residues G113 and 133–138; that span reads IGDYVL. The disordered stretch occupies residues 251–270; the sequence is APTEGTGLIHHRDVEGPGEG. Residues 260 to 270 show a composition bias toward basic and acidic residues; sequence HHRDVEGPGEG.

This sequence belongs to the RNA methyltransferase TrmD family. In terms of assembly, homodimer.

It localises to the cytoplasm. The catalysed reaction is guanosine(37) in tRNA + S-adenosyl-L-methionine = N(1)-methylguanosine(37) in tRNA + S-adenosyl-L-homocysteine + H(+). Its function is as follows. Specifically methylates guanosine-37 in various tRNAs. This is tRNA (guanine-N(1)-)-methyltransferase from Frankia casuarinae (strain DSM 45818 / CECT 9043 / HFP020203 / CcI3).